Reading from the N-terminus, the 454-residue chain is Mitochondrial dynamics protein MID49 (454 aa).

Over 1–22 (MAEFSQKRGKRRSDEGLGSMVD) the chain is Mitochondrial intermembrane. Phosphoserine is present on Ser-13. Residues 23 to 43 (FLLANARLVLGVGGAAVLGIA) form a helical membrane-spanning segment. The Cytoplasmic portion of the chain corresponds to 44-454 (TLAVKRFIDR…SGLQEPEGLL (411 aa)). Residues 76 to 119 (ATPHLQPRPPPAALSQPVLPLAPSSSAPEGPAETDPEVTPQLSS) form a disordered region. Low complexity predominate over residues 88-103 (ALSQPVLPLAPSSSAP).

This sequence belongs to the MID49/MID51 family. In terms of assembly, interacts with DNM1L. As to expression, expressed in all tissues tested with highest expression in heart and skeletal muscle.

The protein resides in the mitochondrion outer membrane. Functionally, mitochondrial outer membrane protein involved in the regulation of mitochondrial organization. It is required for mitochondrial fission and promotes the recruitment and association of the fission mediator dynamin-related protein 1 (DNM1L) to the mitochondrial surface independently of the mitochondrial fission FIS1 and MFF proteins. Regulates DNM1L GTPase activity. This is Mitochondrial dynamics protein MID49 (MIEF2) from Homo sapiens (Human).